A 276-amino-acid polypeptide reads, in one-letter code: 2-dehydro-3-deoxyphosphooctonate aldolase (276 aa).

This sequence belongs to the KdsA family.

It is found in the cytoplasm. It catalyses the reaction D-arabinose 5-phosphate + phosphoenolpyruvate + H2O = 3-deoxy-alpha-D-manno-2-octulosonate-8-phosphate + phosphate. The protein operates within carbohydrate biosynthesis; 3-deoxy-D-manno-octulosonate biosynthesis; 3-deoxy-D-manno-octulosonate from D-ribulose 5-phosphate: step 2/3. Its pathway is bacterial outer membrane biogenesis; lipopolysaccharide biosynthesis. The chain is 2-dehydro-3-deoxyphosphooctonate aldolase from Xylella fastidiosa (strain M23).